The chain runs to 471 residues: Putative multidrug resistance protein MdtD (471 aa).

Topologically, residues 1 to 11 (MTDLPDSTRWQ) are periplasmic. Residues 12-32 (LWIVAFGFFMQSLDTTIVNTA) traverse the membrane as a helical segment. Residues 33–48 (LPSMAQSLGESPLHMH) are Cytoplasmic-facing. Residues 49–69 (MVIVSYVLTVAVMLPASGWLA) form a helical membrane-spanning segment. At 70–76 (DKVGVRN) the chain is on the periplasmic side. The chain crosses the membrane as a helical span at residues 77–97 (IFFTAIVLFTLGSLFCALSGT). Residues 98–101 (LNEL) are Cytoplasmic-facing. Residues 102-124 (LLARALQGVGGAMMVPVGRLTVM) traverse the membrane as a helical segment. Over 125 to 137 (KIVPREQYMAAMT) the chain is Periplasmic. A helical transmembrane segment spans residues 138-158 (FVTLPGQVGPLLGPALGGLLV). At 159–164 (EYASWH) the chain is on the cytoplasmic side. A helical membrane pass occupies residues 165-185 (WIFLINIPVGIIGAIATLLLM). The Periplasmic portion of the chain corresponds to 186–196 (PNYTMQTWRFD). A helical transmembrane segment spans residues 197-217 (LSGFLLLAVGMAVLTLALDGS). Residues 218-224 (KGTGLSP) lie on the Cytoplasmic side of the membrane. The helical transmembrane segment at 225-245 (LAIAGLVAVGVVALVLYLLHA) threads the bilayer. Residues 246-262 (RNNNRALFSLKLFRTRT) are Periplasmic-facing. Residues 263–283 (FSLGLAGSFAGRIGSGMLPFM) form a helical membrane-spanning segment. Residues 284–285 (TP) are Cytoplasmic-facing. A helical transmembrane segment spans residues 286–306 (VFLQIGLGFSPFHAGLMMIPM). Topologically, residues 307-341 (VLGSMGMKRIVVQVVNRFGYRRVLVATTLGLSLVT) are periplasmic. The helical transmembrane segment at 342–362 (LLFMTTALLGWYYVLPFVLFL) threads the bilayer. Over 363–395 (QGMVNSTRFSSMNTLTLKDLPDNLASSGNSLLS) the chain is Cytoplasmic. Residues 396 to 416 (MIMQLSMSIGVTIAGLLLGLF) form a helical membrane-spanning segment. Over 417–430 (GSQHVSVDSGTTQT) the chain is Periplasmic. A helical transmembrane segment spans residues 431-451 (VFMYTWLSMALIIALPAFIFA). Residues 452 to 471 (RVPNDTHQNVAISRRKRSAQ) are Cytoplasmic-facing.

This sequence belongs to the major facilitator superfamily. TCR/Tet family.

It localises to the cell inner membrane. In Shigella boydii serotype 4 (strain Sb227), this protein is Putative multidrug resistance protein MdtD.